The sequence spans 383 residues: L-lactate dehydrogenase (383 aa).

An FMN hydroxy acid dehydrogenase domain is found at 1 to 380; it reads MIISSTFDYR…THESLASTDA (380 aa). Tyr24 contributes to the substrate binding site. FMN-binding residues include Ser106 and Gln127. Residue Tyr129 coordinates substrate. Position 155 (Thr155) interacts with FMN. Residue Arg164 participates in substrate binding. Lys251 serves as a coordination point for FMN. His275 serves as the catalytic Proton acceptor. Arg278 is a binding site for substrate. An FMN-binding site is contributed by 306-330; sequence DSGVRSGLDVVRMIAQGADAVMIGR.

Belongs to the FMN-dependent alpha-hydroxy acid dehydrogenase family. The cofactor is FMN.

Its subcellular location is the cell inner membrane. The catalysed reaction is (S)-lactate + A = pyruvate + AH2. Catalyzes the conversion of L-lactate to pyruvate. Is coupled to the respiratory chain. The sequence is that of L-lactate dehydrogenase from Bartonella quintana (strain Toulouse) (Rochalimaea quintana).